The primary structure comprises 86 residues: Large ribosomal subunit protein bL27 (86 aa).

The segment at 1-21 (MAHKKGASSSRNGRDSAAQRL) is disordered.

The protein belongs to the bacterial ribosomal protein bL27 family.

This chain is Large ribosomal subunit protein bL27 (rpmA), found in Mycobacterium tuberculosis (strain CDC 1551 / Oshkosh).